A 562-amino-acid chain; its full sequence is Cytosolic Fe-S cluster assembly factor nar1 (562 aa).

Cys-20 is a binding site for [4Fe-4S] cluster. Residues 28 to 47 (PKNESSNSQNPYEVTTEDKV) form a disordered region. Residues 29 to 40 (KNESSNSQNPYE) show a composition bias toward polar residues. [4Fe-4S] cluster contacts are provided by Cys-62, Cys-65, Cys-68, Cys-214, and Cys-269. The interval 439-462 (ARVPAASAGGNRRQPISRNSASAG) is disordered. The span at 452–462 (QPISRNSASAG) shows a compositional bias: polar residues. [4Fe-4S] cluster is bound by residues Cys-475 and Cys-479. Disordered regions lie at residues 492 to 513 (REAS…PTPH) and 541 to 562 (HSPS…IGLT). The span at 494 to 505 (ASTSTQSVTAVE) shows a compositional bias: polar residues.

Belongs to the NARF family.

In terms of biological role, component of the cytosolic Fe/S protein assembly machinery. Required for maturation of extramitochondrial Fe/S proteins. May play a role in the transfer of pre-assembled Fe/S clusters to target apoproteins. The protein is Cytosolic Fe-S cluster assembly factor nar1 (nar1) of Aspergillus flavus (strain ATCC 200026 / FGSC A1120 / IAM 13836 / NRRL 3357 / JCM 12722 / SRRC 167).